The sequence spans 198 residues: NAD(P)H dehydrogenase (quinone) (198 aa).

Residues 4 to 189 (VLVLYYSMYG…SIARYQGEYV (186 aa)) enclose the Flavodoxin-like domain. FMN contacts are provided by residues 10-15 (SMYGHI) and 78-80 (TRF). Y12 is a binding site for NAD(+). Position 98 (W98) interacts with substrate. FMN-binding positions include 113–118 (STGTGG) and H133.

Belongs to the WrbA family. FMN is required as a cofactor.

The enzyme catalyses a quinone + NADH + H(+) = a quinol + NAD(+). It carries out the reaction a quinone + NADPH + H(+) = a quinol + NADP(+). The sequence is that of NAD(P)H dehydrogenase (quinone) from Escherichia coli (strain SE11).